The sequence spans 1015 residues: Putative ankyrin repeat protein R96 (1015 aa).

Residues 1 to 14 (MSTVKKSSKKKSSK) show a composition bias toward basic residues. A disordered region spans residues 1–37 (MSTVKKSSKKKSSKKSSSGNESSKKSSPKIVPKHTAK). 8 ANK repeats span residues 136-165 (NGHKVLKILVYENDIPSIIALVENGANIDF), 168-201 (APSNILHICASRNYPVLLKYALSRNEIDINAVNI), 202-231 (DGRSPLYLACLYLNKECIKILLDNGADVEV), 340-370 (LGHNAINTSIMFCNNSLIKYFVDKTDLDFQA), 374-403 (NITNPIQMLVNHGYIDYVETILNRNPKIVS), 456-485 (SGYRPIEVAIRYCSIDVIKELLKYNTTIFA), 498-527 (NNNDIISFATQLGRFDVVTYLIQENVQFQL), and 535-564 (TVPTALLIAIVYHRKNFIQFFLELPQITDC).

The chain is Putative ankyrin repeat protein R96 from Acanthamoeba polyphaga mimivirus (APMV).